We begin with the raw amino-acid sequence, 93 residues long: Pyrimidine/purine nucleoside phosphorylase (93 aa).

Belongs to the nucleoside phosphorylase PpnP family.

It carries out the reaction a purine D-ribonucleoside + phosphate = a purine nucleobase + alpha-D-ribose 1-phosphate. The enzyme catalyses adenosine + phosphate = alpha-D-ribose 1-phosphate + adenine. It catalyses the reaction cytidine + phosphate = cytosine + alpha-D-ribose 1-phosphate. The catalysed reaction is guanosine + phosphate = alpha-D-ribose 1-phosphate + guanine. It carries out the reaction inosine + phosphate = alpha-D-ribose 1-phosphate + hypoxanthine. The enzyme catalyses thymidine + phosphate = 2-deoxy-alpha-D-ribose 1-phosphate + thymine. It catalyses the reaction uridine + phosphate = alpha-D-ribose 1-phosphate + uracil. The catalysed reaction is xanthosine + phosphate = alpha-D-ribose 1-phosphate + xanthine. In terms of biological role, catalyzes the phosphorolysis of diverse nucleosides, yielding D-ribose 1-phosphate and the respective free bases. Can use uridine, adenosine, guanosine, cytidine, thymidine, inosine and xanthosine as substrates. Also catalyzes the reverse reactions. In Shewanella halifaxensis (strain HAW-EB4), this protein is Pyrimidine/purine nucleoside phosphorylase.